Consider the following 260-residue polypeptide: MFLFSRKTKTPISTYSDSYRAPTSIKEVYKDPPLWAWEANKFVTPGLTQTMHRHVDPEALQKMTKCAAQDYTYKSSISGHPYLPEKYWLSPDEEDKCCPSYLDNDRYNTWKTSPCSNYWNKYTGCLPRLSKDTGMESVRGMPLEYPPKQERLNAYEREVVVNMLNSLSRNRTLPQIVPRCGCVDPLPGRLPYQGYESPCSGRHYCLRGMDYCTTREPSTERRLRPLCSQQPTECVALRSPARNAMCCYNSPAIILPVSQP.

This sequence belongs to the SPMIP6 family. As to quaternary structure, microtubule inner protein component of sperm flagellar doublet microtubules. Interacts with alpha-tubulin. Testis-specific, expressed exclusively in germ cells (at protein level). As to expression, testis-specific. In terms of tissue distribution, expressed in both lung and testis.

The protein resides in the cytoplasm. It localises to the cytoskeleton. Its subcellular location is the nucleus. The protein localises to the mitochondrion. It is found in the flagellum axoneme. Its function is as follows. May participate in intramanchette transport and midpiece formation of the sperm tail. May play a potential role in somatic cell proliferation. This is Sperm microtubule inner protein 6 (SPMIP6) from Mus musculus (Mouse).